Here is a 181-residue protein sequence, read N- to C-terminus: Crossover junction endodeoxyribonuclease RuvC (181 aa).

Catalysis depends on residues D7, E67, and D139. Mg(2+)-binding residues include D7, E67, and D139.

It belongs to the RuvC family. In terms of assembly, homodimer which binds Holliday junction (HJ) DNA. The HJ becomes 2-fold symmetrical on binding to RuvC with unstacked arms; it has a different conformation from HJ DNA in complex with RuvA. In the full resolvosome a probable DNA-RuvA(4)-RuvB(12)-RuvC(2) complex forms which resolves the HJ. Mg(2+) is required as a cofactor.

The protein localises to the cytoplasm. It catalyses the reaction Endonucleolytic cleavage at a junction such as a reciprocal single-stranded crossover between two homologous DNA duplexes (Holliday junction).. Its function is as follows. The RuvA-RuvB-RuvC complex processes Holliday junction (HJ) DNA during genetic recombination and DNA repair. Endonuclease that resolves HJ intermediates. Cleaves cruciform DNA by making single-stranded nicks across the HJ at symmetrical positions within the homologous arms, yielding a 5'-phosphate and a 3'-hydroxyl group; requires a central core of homology in the junction. The consensus cleavage sequence is 5'-(A/T)TT(C/G)-3'. Cleavage occurs on the 3'-side of the TT dinucleotide at the point of strand exchange. HJ branch migration catalyzed by RuvA-RuvB allows RuvC to scan DNA until it finds its consensus sequence, where it cleaves and resolves the cruciform DNA. The sequence is that of Crossover junction endodeoxyribonuclease RuvC from Cupriavidus pinatubonensis (strain JMP 134 / LMG 1197) (Cupriavidus necator (strain JMP 134)).